A 383-amino-acid chain; its full sequence is Heme A synthase (383 aa).

8 helical membrane-spanning segments follow: residues 38–58 (VRVW…VGGL), 127–147 (VIGL…KIPP), 153–173 (LFLL…MVAS), 187–207 (LATH…YIMV), 230–250 (ANWL…VAGI), 287–307 (LVQF…LYVW), 321–341 (AFDW…VTVL), and 344–364 (APWT…CLIL). H292 is a binding site for heme. H352 is a heme binding site.

It belongs to the COX15/CtaA family. Type 2 subfamily. As to quaternary structure, interacts with CtaB. The cofactor is heme b.

It localises to the cell membrane. It carries out the reaction Fe(II)-heme o + 2 A + H2O = Fe(II)-heme a + 2 AH2. The protein operates within porphyrin-containing compound metabolism; heme A biosynthesis; heme A from heme O: step 1/1. Functionally, catalyzes the conversion of heme O to heme A by two successive hydroxylations of the methyl group at C8. The first hydroxylation forms heme I, the second hydroxylation results in an unstable dihydroxymethyl group, which spontaneously dehydrates, resulting in the formyl group of heme A. In Dinoroseobacter shibae (strain DSM 16493 / NCIMB 14021 / DFL 12), this protein is Heme A synthase.